The following is a 185-amino-acid chain: Ribosome-recycling factor (185 aa).

It belongs to the RRF family.

The protein resides in the cytoplasm. In terms of biological role, responsible for the release of ribosomes from messenger RNA at the termination of protein biosynthesis. May increase the efficiency of translation by recycling ribosomes from one round of translation to another. The protein is Ribosome-recycling factor of Streptococcus agalactiae serotype V (strain ATCC BAA-611 / 2603 V/R).